Reading from the N-terminus, the 154-residue chain is Myoglobin (154 aa).

The region spanning 2-148 is the Globin domain; that stretch reads GLSDGEWQLV…FRNDIAAKYK (147 aa). The residue at position 4 (Ser4) is a Phosphoserine. His65 contacts nitrite. An O2-binding site is contributed by His65. Thr68 bears the Phosphothreonine mark. Heme b is bound at residue His94.

The protein belongs to the globin family. In terms of assembly, monomeric.

Its subcellular location is the cytoplasm. It localises to the sarcoplasm. It catalyses the reaction Fe(III)-heme b-[protein] + nitric oxide + H2O = Fe(II)-heme b-[protein] + nitrite + 2 H(+). It carries out the reaction H2O2 + AH2 = A + 2 H2O. Its function is as follows. Monomeric heme protein which primary function is to store oxygen and facilitate its diffusion within muscle tissues. Reversibly binds oxygen through a pentacoordinated heme iron and enables its timely and efficient release as needed during periods of heightened demand. Depending on the oxidative conditions of tissues and cells, and in addition to its ability to bind oxygen, it also has a nitrite reductase activity whereby it regulates the production of bioactive nitric oxide. Under stress conditions, like hypoxia and anoxia, it also protects cells against reactive oxygen species thanks to its pseudoperoxidase activity. This is Myoglobin (MB) from Proechimys guairae (Guaira spiny rat).